Reading from the N-terminus, the 554-residue chain is U4/U6 small nuclear ribonucleoprotein PRP4-like protein (554 aa).

The span at 48–65 shows a compositional bias: pro residues; the sequence is APIPMMPHPPVARPPTFR. Residues 48 to 99 form a disordered region; that stretch reads APIPMMPHPPVARPPTFRPPVSQNGGVKTSDSDSESDDEHIEISEESKQVRE. Positions 88–99 are enriched in basic and acidic residues; it reads IEISEESKQVRE. WD repeat units lie at residues 253–292, 296–335, 337–376, 379–418, 421–460, 463–503, and 506–545; these read GDDRPLTGCSFSRDGKILATCSLSGVTKLWEMPQVTNTIA, DHKERATDVVFSPVDDCLATASADRTAKLWKTDGTLLQTF, GHLDRLARVAFHPSGKYLGTTSYDKTWRLWDINTGAELLL, GHSRSVYGIAFQQDGALAASCGLDSLARVWDLRTGRSILV, GHIKPVFSVNFSPNGYHLASGGEDNQCRIWDLRMRKSLYI, AHAN…LVKS, and GHESKVASLDITADSSCIATVSHDRTIKLWTSSGNDDEDE.

It localises to the nucleus speckle. Functionally, participates in pre-mRNA splicing. Part of the U4/U5/U6 tri-snRNP complex, one of the building blocks of the spliceosome. Essential for reproduction. In female gametophyte, is necessary for the egg cell and central cell fate determination and hence reproductive success. Involved in a mechanism that prevents accessory cells from adopting gametic cell fate. Modulates egg cell signaling center that regulates the development of all female gametophytic cells. The sequence is that of U4/U6 small nuclear ribonucleoprotein PRP4-like protein from Arabidopsis thaliana (Mouse-ear cress).